We begin with the raw amino-acid sequence, 170 residues long: MSNGTPTHTLSVLVEDKPGVLARVSSLFSRRGFNIQSLAVGATEQKDMSRMTIVVSVEDSPLEQITKQLNKLINVIKIVEQEEDNSVSRELALIKVRADATTRGQIIEAVNLFRAKVVDVSTESLTIEATGTPEKLEALLRVLEPYGIREIAQSGVVSVSRGPRGIGAAK.

The ACT domain maps to 9–83 (TLSVLVEDKP…NVIKIVEQEE (75 aa)). Lysine 46 is covalently cross-linked (Isoglutamyl lysine isopeptide (Lys-Gln) (interchain with Q-Cter in protein Pup)).

It belongs to the acetolactate synthase small subunit family. Dimer of large and small chains.

It catalyses the reaction 2 pyruvate + H(+) = (2S)-2-acetolactate + CO2. Its pathway is amino-acid biosynthesis; L-isoleucine biosynthesis; L-isoleucine from 2-oxobutanoate: step 1/4. The protein operates within amino-acid biosynthesis; L-valine biosynthesis; L-valine from pyruvate: step 1/4. The chain is Acetolactate synthase small subunit (ilvH) from Mycolicibacterium smegmatis (strain ATCC 700084 / mc(2)155) (Mycobacterium smegmatis).